A 409-amino-acid chain; its full sequence is MAVPLGALWAWSVLDKAVISYYSRKYKPVPLPERPNYSHKDVSIIVPTIDTEDTFTECMRLWLKANPREIVIATVERNKARVEQLIEPLRQQHADKIMVVTAALANKRHQLIVGVKSARGKIFALVDDDVYWHVDSVVPYLLAPFEDAEVGAVAGIQSAEVPPERQDVRVITPWEATATFDLCQWKGSREVHFAADGGCWCLSARTLFIRASILQDQSFANAYTQEVIGRRLVNTADDVVLTGLVFDRGWKVSIQNTPEAEVTTNIPRDHRLVWQVLRWDRGNFRTFLGYMLVSPGYRKMMQRHPYTTWKMVERLARPIWAFAYVWAWLQTLYTAPWIAYAYIAWMAFGWKGWLPTYREFLKRYPYCGRQMWAPLLMDYIGPIVDIYVYLTINNDDWLTRRADTKDIED.

Asparagine 36 carries an N-linked (GlcNAc...) asparagine glycan. A helical membrane pass occupies residues 319–339; that stretch reads IWAFAYVWAWLQTLYTAPWIA.

Belongs to the GT2 glycosyltransferase family.

The protein localises to the membrane. It functions in the pathway secondary metabolite biosynthesis. Its function is as follows. NDP-glycosyltransferase; part of the gene cluster that mediates the biosynthesis of luteodienoside A, a glycosylated polyketide consisting of an unusual 1-O-beta-D-glucopyranosyl-myo-inositol (glucinol) ester of 3-hydroxy-2,2,4-trimethylocta-4,6-dienoic acid. LtbB likely serves as a glucinol synthase by transferring D-glucose to myo-inositol using NDP-glucose as a substrate. The ltbA carnitine O-acyltransferase (cAT) domain uses glucinol produced by the glycosyltransferase ltbB as an offloading substrate to release luteodienoside A from the HR-PKS. Since ltbA and ltbB are sufficient for the biosynthesis of luteodienoside A, the functions of the methyltransferase ltbC and the FAD-binding monooxygenase ltbD within the pathway remain obscur. The sequence is that of NDP-glycosyltransferase ltbB from Aspergillus luteorubrus.